Here is a 213-residue protein sequence, read N- to C-terminus: Cytokinin riboside 5'-monophosphate phosphoribohydrolase LOG1 (213 aa).

Residues glutamate 78, arginine 96 to lysine 97, glycine 113 to glutamate 119, and threonine 125 contribute to the substrate site.

It belongs to the LOG family. In terms of tissue distribution, expressed in roots and shoots. Detected in the vascular tissues of roots, cotyledons, leaves and pistils, in the shoot apical meristem and in immature flowers.

It localises to the cytoplasm. The protein resides in the nucleus. It carries out the reaction N(6)-(dimethylallyl)adenosine 5'-phosphate + H2O = N(6)-dimethylallyladenine + D-ribose 5-phosphate. The enzyme catalyses 9-ribosyl-trans-zeatin 5'-phosphate + H2O = trans-zeatin + D-ribose 5-phosphate. Functionally, cytokinin-activating enzyme working in the direct activation pathway. Phosphoribohydrolase that converts inactive cytokinin nucleotides to the biologically active free-base forms. This chain is Cytokinin riboside 5'-monophosphate phosphoribohydrolase LOG1 (LOG1), found in Arabidopsis thaliana (Mouse-ear cress).